The chain runs to 157 residues: CAPA peptides (157 aa).

Positions 1-21 (MQPTMRIIVSMALLAYAVASA) are cleaved as a signal peptide. Positions 22–28 (YHSNVKL) are excised as a propeptide. Position 42 is a valine amide (valine 42). Positions 45–66 (ASGNTWQLPLNDLYPEYEPAQV) are excised as a propeptide. Glutamine 69 bears the Pyrrolidone carboxylic acid; partial mark. Position 76 is a valine amide (valine 76). Leucine 85 and leucine 117 each carry leucine amide. Positions 120–157 (AFKNDDDEITIQNESNDHSEPEQTELIHEDRRKRQTLN) are excised as a propeptide. A disordered region spans residues 131-157 (QNESNDHSEPEQTELIHEDRRKRQTLN). Basic and acidic residues predominate over residues 134–151 (SNDHSEPEQTELIHEDRR).

It belongs to the pyrokinin family. As to expression, CAPA-periviscerokinin 1: Expressed in corpora cardiaca (CC), corpora allata (CA), antennal lobe (AL) and gnathal ganglion (GNG) (at protein level). Expression detected in most animals in CC and CA and in some animals in AL and GNG (at protein level). CAPA-periviscerokinin 2: Expressed in corpora cardiaca (CC), corpora allata (CA), antennal lobe (AL) and gnathal ganglion (GNG) (at protein level). For non-pyroglutamate form, expression in AL detected in all animals, in CC, CA and GNG in most animals (at protein level). For pyroglutamate form, expression in CC and CA detected in most animals, in AL and GNG in some animals (at protein level). CAPA-periviscerokinin 3: Expressed in corpora cardiaca (CC), corpora allata (CA), antennal lobe (AL) and gnathal ganglion (GNG). Expression detected in most animals in CC and CA and in some animals in AL and GNG (at protein level). CAPA-precursor-related peptide 3: Expressed in corpora cardiaca (CC), corpora allata (CA), antennal lobe (AL) and gnathal ganglion (GNG) (at protein level). Expression in CC and CA detected in some animals, expression in Al and GNG detected in few animals (at protein level). CAPA-trypto-pyrokinin: Expressed in corpora cardiaca (CC), corpora allata (CA), antennal lobe (AL) and gnathal ganglion (GNG) (at protein level). Expression in CC, CA and GNG detected in most animals, in AL in some animals (at protein level).

It localises to the secreted. Functionally, myoactive. The chain is CAPA peptides from Agrotis ipsilon (Black cutworm moth).